Reading from the N-terminus, the 473-residue chain is Spliceosome-associated protein CWC27 homolog (473 aa).

S2 carries the post-translational modification N-acetylserine. The region spanning T11 to V166 is the PPIase cyclophilin-type domain. Positions R177 to K193 are enriched in basic and acidic residues. Disordered regions lie at residues R177–T386 and Q399–R473. Residues S206 to K230 adopt a coiled-coil conformation. Basic and acidic residues predominate over residues S231–H241. Positions G257–E266 are enriched in acidic residues. Composition is skewed to basic and acidic residues over residues S267–A287, E305–E348, and E360–R372. Residues E305–K378 are a coiled coil. S347 is modified (phosphoserine). Acidic residues predominate over residues P405–G419. Basic and acidic residues-rich tracts occupy residues Q426–S438 and R458–R473.

The protein belongs to the cyclophilin-type PPIase family. In terms of assembly, part of the activated spliceosome B/catalytic step 1 spliceosome, one of the forms of the spliceosome which has a well-formed active site but still cannot catalyze the branching reaction and is composed at least of 52 proteins, the U2, U5 and U6 snRNAs and the pre-mRNA. Recruited during early steps of activated spliceosome B maturation, it is probably one of the first proteins released from this complex as he matures to the spliceosome C complex. Component of the minor spliceosome, which splices U12-type introns.

The protein localises to the nucleus. Functionally, as part of the spliceosome, plays a role in pre-mRNA splicing. Probable inactive PPIase with no peptidyl-prolyl cis-trans isomerase activity. As a component of the minor spliceosome, involved in the splicing of U12-type introns in pre-mRNAs. The sequence is that of Spliceosome-associated protein CWC27 homolog from Pongo abelii (Sumatran orangutan).